The primary structure comprises 299 residues: Transcription elongation factor A protein 2 (299 aa).

The TFIIS N-terminal domain occupies 5–82 (EEIARIARRL…KSWKKLLDVS (78 aa)). A Glycyl lysine isopeptide (Lys-Gly) (interchain with G-Cter in ubiquitin) cross-link involves residue Lys57. A phosphoserine mark is found at Ser59 and Ser100. The segment at 83-126 (DGKSRDQGRGTPLPTSSSKDASGTTDLSCKKPDPPRTSSTPRIT) is disordered. Residues 95 to 109 (LPTSSSKDASGTTDL) show a composition bias toward polar residues. The TFIIS central domain occupies 138 to 254 (VRNKCREMLT…EHQMARTGGT (117 aa)). A TFIIS-type zinc finger spans residues 257–297 (DLFTCNKCRKKNCTYTQVQTRSSDEPMTTYVVCNECGNRWK). The Zn(2+) site is built by Cys261, Cys264, Cys289, and Cys292.

The protein belongs to the TFS-II family. In terms of assembly, interacts with the basal transcription factor GTF2B. Interacts with REXO1. Testis specific.

Its subcellular location is the nucleus. In terms of biological role, necessary for efficient RNA polymerase II transcription elongation past template-encoded arresting sites. The arresting sites in DNA have the property of trapping a certain fraction of elongating RNA polymerases that pass through, resulting in locked ternary complexes. Cleavage of the nascent transcript by S-II allows the resumption of elongation from the new 3'-terminus. The chain is Transcription elongation factor A protein 2 (Tcea2) from Rattus norvegicus (Rat).